We begin with the raw amino-acid sequence, 101 residues long: Secreted enzymes activator (101 aa).

Residues 1–10 show a composition bias toward basic residues; that stretch reads MSRRRRRASA. 2 disordered regions span residues 1-26 and 45-101; these read MSRR…PYGS and TRLA…NGRG. Residues 45–60 are compositionally biased toward low complexity; sequence TRLAASSRASRAAVGS. Residues 55-74 constitute a DNA-binding region (H-T-H motif); that stretch reads RAAVGSFDGAKNRPASSRRQ.

Its function is as follows. Increases the production of several extracellular enzymes, like alkaline phosphatase, amylase, protease or lipase. When present in high concentrations, delays the production of pigments and sporulation. This chain is Secreted enzymes activator (saf), found in Streptomyces griseus.